A 480-amino-acid polypeptide reads, in one-letter code: Cytochrome b-c1 complex subunit 1, mitochondrial (480 aa).

Residues 1 to 34 (MAASAVCRAACSGTQALLRTCRSPALLRLPALRG) constitute a mitochondrion transit peptide. N6-acetyllysine is present on residues Lys-111 and Lys-138. Lys-163 carries the post-translational modification N6-acetyllysine; alternate. An N6-succinyllysine; alternate modification is found at Lys-163. Ser-212 is modified (phosphoserine). Thr-214 carries the phosphothreonine modification.

It belongs to the peptidase M16 family. UQCRC1/QCR1 subfamily. Component of the ubiquinol-cytochrome c oxidoreductase (cytochrome b-c1 complex, complex III, CIII), a multisubunit enzyme composed of 11 subunits. The complex is composed of 3 respiratory subunits cytochrome b, cytochrome c1 and Rieske protein UQCRFS1, 2 core protein subunits UQCRC1/QCR1 and UQCRC2/QCR2, and 6 low-molecular weight protein subunits UQCRH/QCR6, UQCRB/QCR7, UQCRQ/QCR8, UQCR10/QCR9, UQCR11/QCR10 and subunit 9, the cleavage product of Rieske protein UQCRFS1. The complex exists as an obligatory dimer and forms supercomplexes (SCs) in the inner mitochondrial membrane with NADH-ubiquinone oxidoreductase (complex I, CI) and cytochrome c oxidase (complex IV, CIV), resulting in different assemblies (supercomplex SCI(1)III(2)IV(1) and megacomplex MCI(2)III(2)IV(2)). Interacts with UQCC6. Interacts with STMP1.

The protein localises to the mitochondrion inner membrane. Its function is as follows. Component of the ubiquinol-cytochrome c oxidoreductase, a multisubunit transmembrane complex that is part of the mitochondrial electron transport chain which drives oxidative phosphorylation. The respiratory chain contains 3 multisubunit complexes succinate dehydrogenase (complex II, CII), ubiquinol-cytochrome c oxidoreductase (cytochrome b-c1 complex, complex III, CIII) and cytochrome c oxidase (complex IV, CIV), that cooperate to transfer electrons derived from NADH and succinate to molecular oxygen, creating an electrochemical gradient over the inner membrane that drives transmembrane transport and the ATP synthase. The cytochrome b-c1 complex catalyzes electron transfer from ubiquinol to cytochrome c, linking this redox reaction to translocation of protons across the mitochondrial inner membrane, with protons being carried across the membrane as hydrogens on the quinol. In the process called Q cycle, 2 protons are consumed from the matrix, 4 protons are released into the intermembrane space and 2 electrons are passed to cytochrome c. The 2 core subunits UQCRC1/QCR1 and UQCRC2/QCR2 are homologous to the 2 mitochondrial-processing peptidase (MPP) subunits beta-MPP and alpha-MPP respectively, and they seem to have preserved their MPP processing properties. May be involved in the in situ processing of UQCRFS1 into the mature Rieske protein and its mitochondrial targeting sequence (MTS)/subunit 9 when incorporated into complex III. Seems to play an important role in the maintenance of proper mitochondrial function in nigral dopaminergic neurons. This is Cytochrome b-c1 complex subunit 1, mitochondrial (Uqcrc1) from Rattus norvegicus (Rat).